Reading from the N-terminus, the 197-residue chain is Ribonuclease HII (197 aa).

Residues 14–197 (EKIVGIDEAG…RSFNLGVNDD (184 aa)) form the RNase H type-2 domain. Residues Asp-20, Glu-21, and Asp-112 each coordinate a divalent metal cation.

It belongs to the RNase HII family. Requires Mn(2+) as cofactor. Mg(2+) is required as a cofactor.

It is found in the cytoplasm. It carries out the reaction Endonucleolytic cleavage to 5'-phosphomonoester.. Its function is as follows. Endonuclease that specifically degrades the RNA of RNA-DNA hybrids. The protein is Ribonuclease HII of Sulfurihydrogenibium sp. (strain YO3AOP1).